Here is a 332-residue protein sequence, read N- to C-terminus: Phosphate acyltransferase (332 aa).

The protein belongs to the PlsX family. Homodimer. Probably interacts with PlsY.

It is found in the cytoplasm. The catalysed reaction is a fatty acyl-[ACP] + phosphate = an acyl phosphate + holo-[ACP]. It functions in the pathway lipid metabolism; phospholipid metabolism. Catalyzes the reversible formation of acyl-phosphate (acyl-PO(4)) from acyl-[acyl-carrier-protein] (acyl-ACP). This enzyme utilizes acyl-ACP as fatty acyl donor, but not acyl-CoA. This chain is Phosphate acyltransferase, found in Streptococcus mutans serotype c (strain ATCC 700610 / UA159).